The following is a 291-amino-acid chain: MIQIFFLGTGAGSPSKKRKLPAFLVRREGLNILLDCGEGTQYTLMNNKLGINSIKIIGITHMHGDHVFGLLGVIASMGLLDRKETLYILGPRDLKDFLYTSFEYSKFNPSFKIEFIDNYNDQNITIATFKTCHTVESQGYLISERDRVKIDEEKLEKEKIKDWRVMRKLKEGKTVEYNGKFLKPEDYLVIKRGLKVAYTGDTIPCQSVIESVKGVDLLIHDSTFLNEPSAFTYGHSNVADAAKVALEASVKLLALTHISPRYEDVTEHLKVARRIFPKSILPDDLSYITLK.

Positions 61, 63, 65, 66, 133, 201, and 257 each coordinate Zn(2+). Catalysis depends on Asp-65, which acts as the Proton acceptor.

The protein belongs to the RNase Z family. Homodimer. Zn(2+) serves as cofactor.

The catalysed reaction is Endonucleolytic cleavage of RNA, removing extra 3' nucleotides from tRNA precursor, generating 3' termini of tRNAs. A 3'-hydroxy group is left at the tRNA terminus and a 5'-phosphoryl group is left at the trailer molecule.. Functionally, zinc phosphodiesterase, which displays some tRNA 3'-processing endonuclease activity. Probably involved in tRNA maturation, by removing a 3'-trailer from precursor tRNA. This is Ribonuclease Z from Saccharolobus islandicus (strain Y.N.15.51 / Yellowstone #2) (Sulfolobus islandicus).